The chain runs to 1383 residues: DNA-directed RNA polymerase subunit beta (1383 aa).

The protein belongs to the RNA polymerase beta chain family. As to quaternary structure, the RNAP catalytic core consists of 2 alpha, 1 beta, 1 beta' and 1 omega subunit. When a sigma factor is associated with the core the holoenzyme is formed, which can initiate transcription.

It catalyses the reaction RNA(n) + a ribonucleoside 5'-triphosphate = RNA(n+1) + diphosphate. DNA-dependent RNA polymerase catalyzes the transcription of DNA into RNA using the four ribonucleoside triphosphates as substrates. In Xanthomonas axonopodis pv. citri (strain 306), this protein is DNA-directed RNA polymerase subunit beta.